A 65-amino-acid chain; its full sequence is 7 kDa A-type inclusion protein (65 aa).

Polar residues predominate over residues 1–20 (MSNQNIPQLSEYQTSVSQVA). The interval 1–31 (MSNQNIPQLSEYQTSVSQVAVTPPPKPETPQ) is disordered.

The sequence is that of 7 kDa A-type inclusion protein from Vaccinia virus (strain Copenhagen) (VACV).